We begin with the raw amino-acid sequence, 127 residues long: Fluoride-specific ion channel FluC (127 aa).

Transmembrane regions (helical) follow at residues 28-48, 73-93, and 98-118; these read LALFGFPWMTCFINISGSLAM, TGVLGGYTTFSTFSLENALLI, and VGLAVLYSLVSVGLGLGGLFL. Positions 77 and 80 each coordinate Na(+).

Belongs to the fluoride channel Fluc/FEX (TC 1.A.43) family.

It localises to the cell inner membrane. The enzyme catalyses fluoride(in) = fluoride(out). Its activity is regulated as follows. Na(+) is not transported, but it plays an essential structural role and its presence is essential for fluoride channel function. Its function is as follows. Fluoride-specific ion channel. Important for reducing fluoride concentration in the cell, thus reducing its toxicity. The chain is Fluoride-specific ion channel FluC from Beijerinckia indica subsp. indica (strain ATCC 9039 / DSM 1715 / NCIMB 8712).